Consider the following 746-residue polypeptide: Ribosome biogenesis protein BOP1 (746 aa).

The interval 1–116 (MAGSRGAGRT…PCPRTEMASA (116 aa)) is disordered. Residues 43 to 65 (SHSTGSDSGVSDSEESVFSGLED) show a composition bias toward low complexity. A compositionally biased stretch (acidic residues) spans 66 to 87 (SGSDSSEDDDEGDEEGEDGALD). The span at 88–99 (DEGHSGIKKTTE) shows a compositional bias: basic and acidic residues. At threonine 106 the chain carries Phosphothreonine. Tyrosine 122 bears the Phosphotyrosine mark. A phosphoserine mark is found at serine 126 and serine 127. Positions 265–427 (MGWIQPRRPR…CLSVSPGGQW (163 aa)) are sufficient for nucleolar localization. WD repeat units follow at residues 411–450 (GHSD…CVRT), 452–492 (PVGG…RLVA), 532–576 (CHGK…SPFR), 577–615 (RSHG…LTKK), 618–657 (PNCK…KPYR), 661–700 (HHKK…DLLQ), and 716–746 (TRDL…RLFT).

Belongs to the WD repeat BOP1/ERB1 family. As to quaternary structure, component of the PeBoW complex, composed of BOP1, PES1 and WDR12. The complex is held together by BOP1, which interacts with PES1 via its N-terminal domain and with WDR12 via a high-affinity interaction between the seven-bladed beta-propeller domains of the 2 proteins. The NOP7 complex associates with the 66S pre-ribosome. The PeBoW complex associates with DDX27, BOP1 interacts directly with DDX27.

The protein resides in the nucleus. Its subcellular location is the nucleolus. The protein localises to the nucleoplasm. Its function is as follows. Component of the PeBoW complex, which is required for maturation of 28S and 5.8S ribosomal RNAs and formation of the 60S ribosome. This is Ribosome biogenesis protein BOP1 from Homo sapiens (Human).